A 361-amino-acid chain; its full sequence is Basic helix-loop-helix protein 79 (361 aa).

Residues 66 to 159 are disordered; the sequence is APEASNGSGS…ASTVTAGQKT (94 aa). Residues 124–138 are compositionally biased toward basic and acidic residues; it reads GRPERARPGAKKKAE. Positions 146-157 are enriched in polar residues; the sequence is PATSASTVTAGQ. The Nuclear localization signal signature appears at 166-173; the sequence is ARRGQATD. The interval 170-183 is basic motif; degenerate; sequence QATDSHSLAERVRR. A bHLH domain is found at 170–220; sequence QATDSHSLAERVRRERISERMRYLQELVPGCNKVTGKAGMLDEIINYVQSL. A helix-loop-helix motif region spans residues 184–220; the sequence is ERISERMRYLQELVPGCNKVTGKAGMLDEIINYVQSL.

The protein belongs to the bHLH protein family. Homodimer. Interacts with IBH1.

Its subcellular location is the nucleus. In terms of biological role, together with BCL1, positive regulator of cell elongation at least partially through increased gibberellic acid (GA) biosynthesis. This Oryza sativa subsp. indica (Rice) protein is Basic helix-loop-helix protein 79.